The following is a 99-amino-acid chain: Putative pterin-4-alpha-carbinolamine dehydratase (99 aa).

It belongs to the pterin-4-alpha-carbinolamine dehydratase family.

The catalysed reaction is (4aS,6R)-4a-hydroxy-L-erythro-5,6,7,8-tetrahydrobiopterin = (6R)-L-erythro-6,7-dihydrobiopterin + H2O. The protein is Putative pterin-4-alpha-carbinolamine dehydratase of Synechococcus sp. (strain CC9311).